Here is a 491-residue protein sequence, read N- to C-terminus: Inositol-pentakisphosphate 2-kinase (491 aa).

The EXKPK motif signature appears at 136-140 (EIKPK). Residue serine 282 is modified to Phosphoserine.

The protein belongs to the IPK1 type 2 family. As to expression, ubiquitously expressed, with high expression in heart, brain, testis and placenta.

The protein localises to the cytoplasm. It localises to the nucleus. The catalysed reaction is 1D-myo-inositol 1,3,4,5,6-pentakisphosphate + ATP = 1D-myo-inositol hexakisphosphate + ADP + H(+). Functionally, phosphorylates Ins(1,3,4,5,6)P5 at position 2 to form Ins(1,2,3,4,5,6)P6 (InsP6 or phytate). InsP6 is involved in many processes such as mRNA export, non-homologous end-joining, endocytosis, ion channel regulation. It also protects cells from TNF-alpha-induced apoptosis. The polypeptide is Inositol-pentakisphosphate 2-kinase (IPPK) (Homo sapiens (Human)).